Here is a 284-residue protein sequence, read N- to C-terminus: MEVGLNEFLDMKKRYEDFKMKNKREPRYVTTKNGYKVMLPVFKDMLRRYEDFVRINGREPNYISIQPQPNGKIEIKKFRDMLRRYEDFVRINGREPNIIYLEQGKSDHVSLGTFKDMLRRYKDFVRINGREPNYISIQPQPSLKGHWTTKVIEKIGTFHDATSLYERVKKTCKYKYYYNDQVPNHVAVMRMTTSGINCTDACQLFSKVLEEMGYEVKIEHVRVKCNDGKWYGHYLLRVGGFELKDGTIWDYVSATKTGRPLGVPCCTAGFQHLGWGIVGPVYDK.

Pseudomurein-binding repeat stretches follow at residues glycine 4 to threonine 31, glycine 34 to isoleucine 65, asparagine 70 to tyrosine 100, and serine 106 to isoleucine 137. Active-site residues include cysteine 198, histidine 233, and aspartate 250.

Belongs to the Psimunavirus Pseudomurein endoisopeptidase family. As to quaternary structure, monomer. The cofactor is Ca(2+). Mg(2+) is required as a cofactor.

Its function is as follows. Cysteine protease that cleaves the cell wall of its host methanogen under hydrogen limitation of the latter (autolysis). Cleaves the epsilon-Ala-Lys isopeptide bond in the oligopeptides of pseudomurein. The polypeptide is Pseudomurein endoisopeptidase PeiW (peiW) (Methanothermobacter phage psiM100).